The primary structure comprises 148 residues: Hemoglobin subunit beta-B (148 aa).

Positions 3 to 148 (DWTDAERAAI…VVSALGRQYH (146 aa)) constitute a Globin domain. Heme b is bound by residues His64 and His93.

The protein belongs to the globin family. Heterotetramer of two alpha chains and two beta chains. In terms of tissue distribution, red blood cells.

In terms of biological role, involved in oxygen transport from gills to the various peripheral tissues. This chain is Hemoglobin subunit beta-B (hbb2), found in Seriola quinqueradiata (Five-ray yellowtail).